The sequence spans 37 residues: Large ribosomal subunit protein bL36 (37 aa).

Belongs to the bacterial ribosomal protein bL36 family.

This chain is Large ribosomal subunit protein bL36, found in Synechococcus sp. (strain WH7803).